The following is a 156-amino-acid chain: MRSSAKQEELVRAFKALLKEEKFSSQGEIVLALQDQGFENINQSKVSRMLTKFGAVRTRNAKMEMVYCLPAELGVPTTSSPLKNLVLDIDYNDAVVVIHTSPGAAQLIARLLDSLGKAEGILGTIAGDDTIFTTPASGFSVRDLYEAILELFEQEL.

It belongs to the ArgR family.

Its subcellular location is the cytoplasm. Its pathway is amino-acid biosynthesis; L-arginine biosynthesis [regulation]. Regulates arginine biosynthesis genes. The sequence is that of Arginine repressor from Salmonella agona (strain SL483).